A 337-amino-acid polypeptide reads, in one-letter code: MILSIESSCDDSSIAVTETSTKKILYHKKISQEAEHSCYGGVVPELASRLHAVALPKILEETKPWFDKLKAVAVTNQPGLGVTLLEGIAMAKTVAVLQNIPLIPVHHLKGHIYSLFIEKKTLFPLLVLLISGGHTQIIRVKDFEHMEILATSMDDSVGESFDKCAKMMHLGYPGGPLIEALALKGDENRFDLPVPLRNSPLIAFSLSGLKNAVRLTVEKLGGAEKMTEQDEADLSASFQKAVKLHLLQKSKKIFAKEPIRDFAIVGGASANQYLRGAYADLCREFRKTMHVAPLQYCSDNAAMIGRYAIDAYEREQFIDPNEIDIVSTKKQQAGMLL.

Fe cation is bound by residues histidine 107 and histidine 111. Residues 129–133 (LISGG), aspartate 162, glycine 175, and asparagine 271 each bind substrate. Aspartate 299 is a Fe cation binding site.

It belongs to the KAE1 / TsaD family. The cofactor is Fe(2+).

It localises to the cytoplasm. The catalysed reaction is L-threonylcarbamoyladenylate + adenosine(37) in tRNA = N(6)-L-threonylcarbamoyladenosine(37) in tRNA + AMP + H(+). In terms of biological role, required for the formation of a threonylcarbamoyl group on adenosine at position 37 (t(6)A37) in tRNAs that read codons beginning with adenine. Is involved in the transfer of the threonylcarbamoyl moiety of threonylcarbamoyl-AMP (TC-AMP) to the N6 group of A37, together with TsaE and TsaB. TsaD likely plays a direct catalytic role in this reaction. This is tRNA N6-adenosine threonylcarbamoyltransferase from Sulfurovum sp. (strain NBC37-1).